Consider the following 1875-residue polypeptide: MTTRFPHLTDGHPVEDTTLQSITLDVGYYPSLRSTSTEQKIHVLTIAWSILLFAYEENDSVRFGLEREDGWSCVAVDVHQEVRWQDLTVKGHGVLGEDSGVNTGVCLGGQIPMELQLVLCMDGSDSDSDSSLSMVYQPCLLSAGQAANVASTVEAILQALQGPNVPVGEIDMLGQRHVECIAGFNLAGRDLPAGCLHGIVEGQVRENGDRAAVDAWDGRLTYRELDVYATQLSGYLVSLGLAGSFVPLCADKSVWAVVAMLAILKAGAACSPLEPSHPRSRLESMVQTCGARAVLVTEGYASLFQMDGVEVVVVSPDVLALVQQTGTSLEISPTQGSAAFLMWTSGSTGAPKGVVLEHPALSSSITAYATASQFTPRTRTFQFTSFTFTVSLCDLFGTMSRGGCVCLPSEAQRLNDLAGALRDFRATFCWLTSTSLASLHPSQVPDLRSITVGGESLAEEIVARWASRCRLTVSYGTTETCGWCLLNPGLSPTSDARILGKPTIPAAWITHPDDPNRLVPIGAVGELLVEGPFLARGYLHDEERTAAQFIPPPAWMARFRPGETTRLYRTNDLVRYNSDGSIRFAGRRQAHAKIRGNRINLTEIESHVRRACGTADVVVDVVSTRDRVDVLTAFMLSPGPRQPLDGPLIQQADDGFRQIVESALHGLEDSLPSTMIPTAFVPLSRLPLTRTNKADRRLLREQAGQMSRAELAQLAAHNRAPAESPMTAAERVMQQLWSELMGLPLSSIGAKDSFFHLGGDSVLAIRLVPMAREHGLFLTVLDVFHHPRLGDLVAHIKDAGSPGPDTWTASPTAAEDVEHLKPEVARQCGVRPSDIEDVYPCTTLQEGLMALSAQRAGAYILTMAYEIPPAVDVARLQEAWQTVVRALPILRTRIVHLPSIGFHQAVVDEPIAWHFVSSEDEFRQSNRSNSMSLGSRLARFALLQPDSAPARLLLAVHHSIFDRWSAPLLLAEVEKAYAGQAVAQQHFRGFVAYVCSRPAEESDAFWRDRLADASPTVFPRLPDATYLPNPTSSRDTMVVLSSSRSDFTATSRLRLCWALLLSQHTGNTDVVFGAVSTGRSAPVAGIESLIGPTLATVPLRVQINGDASVADALQSLQEDATAMLPHEQRGLQNIVRIGPEAKAACAFQSLLIVHASNSGSKLDLMGMMEDEQLPELFSYGLTLSCEVQGPDRIHLQAFFDPRMIEEGYVEVLLSQLTHAMRQVNDVPDCKLDDLNLVSPLDEERLRTWNTAWSPAQVCVHEAIQKQSYAQPQAEAVCSWDGSLTYASLDERSSRLASQLHSRGVKQGAFVPLLLEKSKWTPVAMLAVMKAGGAFVLLDASFPVERLQSICNQLDAPIVVSSEKHRLLAGQLSRDLLLVSAMDSDAPLTSLPPVHPDDAVYAVFTSGSTGTPKGVIINHASYATGAHAHTTPASITPTARVLQFASYAFDASIIEHLTTLMAGGCVCIISDEERTSSLAEAVAARKATWTWLTPSVVRALEPRDFPSLTHLCLMGESMGRTEIERWSGHVHLMQAYGPAECSVLATLEPTLTGQSDPRNIGTPRGCNAWIVDRDDHTRLAPVGTIGELLIEGPIVGRGYHGDVVQTQAAFCEAPEWIRQFRPGQATPARVYKTGDLVQYSSRMDGSLLYIARKDTQVKIRGQRLELSEVEYHARTAMASSSDIVVDVVSPGGRQMLALFYTDDVMHDSPCMALPMTPDQRRFLSQVRPALEARLPSFMVPTLWIPVTRIPLSPSRKTDRRRLQSLVGDLTPDEYKPYIIASTSNSTQSLSKGEMKQHLSEHEILLQRLIWQVLEGDECSSPRPRPPISMDELFVNIGGDSLGALSLTSLAKQSGFTFMAGDVLGCTLGELARMRQE.

Residues 202-590 (GQVRENGDRA…SIRFAGRRQA (389 aa)) form an adenylation 1 region. Residues 724–800 (SPMTAAERVM…DLVAHIKDAG (77 aa)) enclose the Carrier domain. The residue at position 761 (Ser761) is an O-(pantetheine 4'-phosphoryl)serine. The segment at 836–1245 (EDVYPCTTLQ…LVSPLDEERL (410 aa)) is condensation. Residues 1264–1659 (QKQSYAQPQA…ARKDTQVKIR (396 aa)) are adenylation 2.

The protein belongs to the NRP synthetase family.

The catalysed reaction is 7-carboxymellein + L-phenylalanine + ATP = ochratoxin B + ADP + phosphate + H(+). It participates in mycotoxin biosynthesis. Nonribosomal peptide synthetase; part of the gene cluster that mediates the biosynthesis of ochratoxin A (OTA), a mycotoxin composed of a chlorinated type I polyketide dihydroisocoumarin moiety linked to L-phenylalanine, and demonstrated to have nephrotoxic, immunotoxic, genotoxic, neurotoxic, and teratogenic properties. OtaB is responsible for the linking of phenylalanine to the dihydroisocoumarin ring. The pathway begins with the highly reducing polyketide synthase otaA that catalyzes the formation of the isocoumarin group during the initial stages of biosynthesis, starting from one acetate and 4 malonate units, to originate the characteristic pentaketide skeleton 7-methylmellein (7-MM) of the OTA molecule. The newly identified cyclase otaY might be involved in the polyketide cyclization reaction during the initial steps of the OTA biosynthesis. 7-MM is then oxidized into 7-carboxymellein (also called ochratoxin beta) by the cytochrome P450 monooxygenase otaC. The NRPS encoded by the otaB gene is involved in the linking of phenylalanine to the dihydroisocoumarin ring. The reaction catalyzed by NRPS results in the production of ochratoxin B (OTB), which is the non-chlorinated analog of OTA and which subsequently serves as the substrate of the halogenase otaD for chlorination activity to form the final molecular structure of OTA, containing a chlorine atom in the C-5 position of the molecule. In Aspergillus carbonarius (strain ITEM 5010), this protein is Nonribosomal peptide synthetase otaB.